Consider the following 276-residue polypeptide: Undecaprenyl-diphosphatase 1 (276 aa).

7 helical membrane-spanning segments follow: residues Ile-4–Val-24, Thr-46–Tyr-63, Phe-83–Lys-103, Val-108–Trp-128, Val-187–Glu-207, Val-217–Cys-237, and Val-252–Trp-272.

It belongs to the UppP family.

The protein resides in the cell inner membrane. It carries out the reaction di-trans,octa-cis-undecaprenyl diphosphate + H2O = di-trans,octa-cis-undecaprenyl phosphate + phosphate + H(+). Functionally, catalyzes the dephosphorylation of undecaprenyl diphosphate (UPP). Confers resistance to bacitracin. The protein is Undecaprenyl-diphosphatase 1 of Burkholderia lata (strain ATCC 17760 / DSM 23089 / LMG 22485 / NCIMB 9086 / R18194 / 383).